The chain runs to 120 residues: Large-conductance mechanosensitive channel (120 aa).

The next 2 helical transmembrane spans lie at 7–27 (EFALKGNVLDLAIAVVMGAAF) and 64–84 (GLFIQSVIDFIIIAFALFIFV).

This sequence belongs to the MscL family. As to quaternary structure, homopentamer.

Its subcellular location is the cell membrane. Its function is as follows. Channel that opens in response to stretch forces in the membrane lipid bilayer. May participate in the regulation of osmotic pressure changes within the cell. This is Large-conductance mechanosensitive channel from Staphylococcus aureus (strain Mu3 / ATCC 700698).